The sequence spans 307 residues: Alginate lyase (307 aa).

The N-terminal stretch at 1-20 (MLKSGVMVASLCLFSVPSRA) is a signal peptide.

The protein belongs to the polysaccharide lyase 7 family.

It is found in the secreted. It carries out the reaction Eliminative cleavage of alginate to give oligosaccharides with 4-deoxy-alpha-L-erythro-hex-4-enuronosyl groups at their non-reducing ends and beta-D-mannuronate at their reducing end.. Functionally, degrades alginates that contain guluronic acid. The sequence is that of Alginate lyase (alyA) from Klebsiella pneumoniae.